The primary structure comprises 184 residues: Elongation factor P (184 aa).

It belongs to the elongation factor P family.

It localises to the cytoplasm. Its pathway is protein biosynthesis; polypeptide chain elongation. Its function is as follows. Involved in peptide bond synthesis. Stimulates efficient translation and peptide-bond synthesis on native or reconstituted 70S ribosomes in vitro. Probably functions indirectly by altering the affinity of the ribosome for aminoacyl-tRNA, thus increasing their reactivity as acceptors for peptidyl transferase. The sequence is that of Elongation factor P from Variovorax paradoxus (strain S110).